A 122-amino-acid chain; its full sequence is uncharacterized protein (122 aa).

Residues 93-113 (ILRICIVFLSLKIYTLTLVII) traverse the membrane as a helical segment.

It is found in the membrane. This is an uncharacterized protein from Saccharomyces cerevisiae (strain ATCC 204508 / S288c) (Baker's yeast).